The chain runs to 387 residues: Xylose isomerase (387 aa).

Catalysis depends on residues His53 and Asp56. Positions 180, 216, 219, 244, 254, 256, and 286 each coordinate Mg(2+).

It belongs to the xylose isomerase family. Homotetramer. Requires Mg(2+) as cofactor.

Its subcellular location is the cytoplasm. It catalyses the reaction alpha-D-xylose = alpha-D-xylulofuranose. This is Xylose isomerase (xylA) from Thermus caldophilus.